A 176-amino-acid polypeptide reads, in one-letter code: NAD(P)H-quinone oxidoreductase subunit 6, chloroplastic (176 aa).

A run of 5 helical transmembrane segments spans residues 10 to 30 (ILLV…VLLT), 32 to 52 (PISS…FYIP), 61 to 81 (AQLL…VMFM), 92 to 112 (LWTI…FSLI), and 152 to 172 (FYLP…GAIA).

It belongs to the complex I subunit 6 family. As to quaternary structure, NDH is composed of at least 16 different subunits, 5 of which are encoded in the nucleus.

The protein resides in the plastid. It is found in the chloroplast thylakoid membrane. The enzyme catalyses a plastoquinone + NADH + (n+1) H(+)(in) = a plastoquinol + NAD(+) + n H(+)(out). The catalysed reaction is a plastoquinone + NADPH + (n+1) H(+)(in) = a plastoquinol + NADP(+) + n H(+)(out). Functionally, NDH shuttles electrons from NAD(P)H:plastoquinone, via FMN and iron-sulfur (Fe-S) centers, to quinones in the photosynthetic chain and possibly in a chloroplast respiratory chain. The immediate electron acceptor for the enzyme in this species is believed to be plastoquinone. Couples the redox reaction to proton translocation, and thus conserves the redox energy in a proton gradient. In Chloranthus spicatus (Chulantree), this protein is NAD(P)H-quinone oxidoreductase subunit 6, chloroplastic (ndhG).